A 243-amino-acid polypeptide reads, in one-letter code: Probable transcriptional regulatory protein BAPKO_0024/BafPKo_0025 (243 aa).

Belongs to the TACO1 family.

The protein resides in the cytoplasm. The protein is Probable transcriptional regulatory protein BAPKO_0024/BafPKo_0025 of Borreliella afzelii (strain PKo) (Borrelia afzelii).